An 89-amino-acid polypeptide reads, in one-letter code: Small ribosomal subunit protein bS16c (89 aa).

It belongs to the bacterial ribosomal protein bS16 family.

It is found in the plastid. It localises to the chloroplast. In Morus indica (Mulberry), this protein is Small ribosomal subunit protein bS16c.